We begin with the raw amino-acid sequence, 403 residues long: Argininosuccinate synthase (403 aa).

10–18 (AYSGGLDTS) is a binding site for ATP. An L-citrulline-binding site is contributed by Y87. Position 117 (G117) interacts with ATP. T119, N123, and D124 together coordinate L-aspartate. Residue N123 coordinates L-citrulline. L-citrulline-binding residues include R127, S175, S184, E260, and Y272.

The protein belongs to the argininosuccinate synthase family. Type 1 subfamily. Homotetramer.

Its subcellular location is the cytoplasm. The enzyme catalyses L-citrulline + L-aspartate + ATP = 2-(N(omega)-L-arginino)succinate + AMP + diphosphate + H(+). The protein operates within amino-acid biosynthesis; L-arginine biosynthesis; L-arginine from L-ornithine and carbamoyl phosphate: step 2/3. In Bacillus pumilus (strain SAFR-032), this protein is Argininosuccinate synthase.